The sequence spans 186 residues: Ribonuclease M5 (186 aa).

Residues 4-94 (KEIIVVEGRD…AKPKNKRGIG (91 aa)) form the Toprim domain. Mg(2+) is bound by residues glutamate 10, aspartate 56, and aspartate 58.

Belongs to the ribonuclease M5 family. In terms of assembly, requires ribosomal protein L18 (rplR) for catalysis; it can be replaced by 30% dimethylsulfoxide suggesting L18 functions as an rRNA folding chaperone. The cofactor is Mg(2+). Requires Mn(2+) as cofactor. Ca(2+) serves as cofactor.

The protein localises to the cytoplasm. The enzyme catalyses Endonucleolytic cleavage of RNA, removing 21 and 42 nucleotides, respectively, from the 5'- and 3'-termini of a 5S-rRNA precursor.. In terms of biological role, required for correct processing of both the 5' and 3' ends of 5S rRNA precursor. Cleaves both sides of a double-stranded region yielding mature 5S rRNA in one step. Releases 5'-phosphoryl and 3'-hydroxy termini. The chain is Ribonuclease M5 from Bacillus subtilis (strain 168).